Reading from the N-terminus, the 425-residue chain is Decarboxylase flvG (425 aa).

Lys-82 bears the N6-(pyridoxal phosphate)lysine mark. Pyridoxal 5'-phosphate is bound by residues Ser-213, Gly-250, and 281–284 (EPGR). 331–332 (FE) serves as a coordination point for substrate. Cys-365 functions as the Proton donor; shared with dimeric partner in the catalytic mechanism. Asp-366 is a substrate binding site. Residue Tyr-395 participates in pyridoxal 5'-phosphate binding.

It belongs to the Orn/Lys/Arg decarboxylase class-II family. As to quaternary structure, homodimer. Only the dimer is catalytically active, as the active sites are constructed of residues from both monomers. The cofactor is pyridoxal 5'-phosphate.

The protein resides in the cytoplasm. The enzyme catalyses N(6),N(6)-dimethyl-L-lysine + H(+) = N,N-dimethyl-cadaverine + CO2. It functions in the pathway secondary metabolite biosynthesis; terpenoid biosynthesis. Functionally, decarboxylase; part of the gene cluster that mediates the biosynthesis of flavunoidine, an alkaloidal terpenoid with a tetracyclic cage-like core connected to dimethylcadaverine via a C-N bond and acylated with 5,5-dimethyl-L-pipecolate. The tetracyclic core is synthesized by the terpene cyclase flvE and the cytochrome P450 monooxygenase flvD. The terpene cyclase flvE catalyzes the cyclization of farnesyl pyrophosphate (FPP) to form (1R,4R,5S)-(+)-acoradiene and the cytochrome P450 monooxygenase flvD is then responsible for oxidative conversion of (1R,4R,5S)-(+)-acoradiene into the tetracyclic cage present in the final product flavunoidine. In parallel, the N-methyltransferase flvH dimethylates L-lysine to give N,N-dimethyl-L-Lysin which is decarboxylated by flvG to afford dimethylcadaverine. The terpene cyclase-like protein flvF is the enzyme that attaches the dimethylcadaverine precusor at the C-7 of the tetracyclic cage to yield pre-flavunoidine. The cytochrome monooxygenase flvC hydroxylates the C-10 position of pre-flavunoidine whereas the NRPS flvI acylates the terpenoid core at the hydroxylated C-10 with dimethylpipecolate to yield final flavunoidine. The bifunctional enzyme flvA and the dehydrogenase flvB are responsible for the synthesis of the dimethylpipecolate precursor. The PLP-dependent lyase domain of flvA might use L-O-acetyl-homoserine and alpha-keto-isovalerate to form an intermediary ketone that can cyclize intramolecularly to yield an imine. The imine can be reduced by flvB to yield the 6-carboxylated pipecolate. The C-terminal alpha-KG-dependent oxygenase domain of flvA is then proposed to catalyze the decarboxylation to yield dimethylpipecolate. The protein is Decarboxylase flvG of Aspergillus flavus (strain ATCC 200026 / FGSC A1120 / IAM 13836 / NRRL 3357 / JCM 12722 / SRRC 167).